A 175-amino-acid polypeptide reads, in one-letter code: NADH-ubiquinone oxidoreductase chain 6 (175 aa).

The next 6 membrane-spanning stretches (helical) occupy residues 1-21, 25-45, 51-71, 87-107, 112-132, and 148-168; these read MMYIVFIMSVLYVVGFIGFSS, PVYGGMSLVVSGGLGCGIIMG, LGLVVFLVYLGGMMVVFGYTI, VVLGAFLVGLLMEVFMIMWLF, ELVGFYFGGLEDLMVLGEGGF, and YGFWFLAMAGWMLFVSIFIAI.

Belongs to the complex I subunit 6 family. Core subunit of respiratory chain NADH dehydrogenase (Complex I) which is composed of 45 different subunits.

The protein resides in the mitochondrion inner membrane. It catalyses the reaction a ubiquinone + NADH + 5 H(+)(in) = a ubiquinol + NAD(+) + 4 H(+)(out). In terms of biological role, core subunit of the mitochondrial membrane respiratory chain NADH dehydrogenase (Complex I) which catalyzes electron transfer from NADH through the respiratory chain, using ubiquinone as an electron acceptor. Essential for the catalytic activity and assembly of complex I. This Loxodonta africana (African elephant) protein is NADH-ubiquinone oxidoreductase chain 6 (MT-ND6).